Reading from the N-terminus, the 182-residue chain is Antigenic integral membrane glycoprotein (182 aa).

Positions 1–35 (MFSFHERMKKKHVTIRVYKHERILVFLFVLFISTT) are cleaved as a signal peptide. N-linked (GlcNAc...) asparagine glycosylation is found at Asn88 and Asn120. Residues 162–180 (EFLMSSCIVITLNLFIFMY) traverse the membrane as a helical segment. Cys168 carries the S-palmitoyl cysteine lipid modification.

Its subcellular location is the cell membrane. In terms of biological role, major antigen in the surface tegument. This Schistosoma mansoni (Blood fluke) protein is Antigenic integral membrane glycoprotein.